We begin with the raw amino-acid sequence, 1430 residues long: 3'-5' RNA helicase YTHDC2 (1430 aa).

The disordered stretch occupies residues 1-37 (MSRPSSVSPRQPAPGGGGGGGPSPCGPGGGGRAKGLK). Residues 14–33 (PGGGGGGGPSPCGPGGGGRA) show a composition bias toward gly residues. Positions 38-106 (DIRIDEEVKI…NRYLTVKKKD (69 aa)) constitute an R3H domain. A Helicase ATP-binding domain is found at 203–369 (VKIIKENKVV…FGSCPVIYIQ (167 aa)). Position 216 to 223 (216 to 223 (GETGSGKT)) interacts with ATP. The DEAH box motif lies at 316-319 (DEVH). 2 ANK repeats span residues 506–538 (TSAT…SKAS) and 539–571 (NGWM…FGNL). Residues 612 to 784 (LLYNICHSCD…ELCLHTKLLA (173 aa)) enclose the Helicase C-terminal domain. 3 positions are modified to phosphoserine: serine 1089, serine 1090, and serine 1092. Residues 1164-1174 (EQSAGLQQPSG) show a composition bias toward polar residues. Residues 1164–1288 (EQSAGLQQPS…SPSPRPNMPV (125 aa)) form a disordered region. The segment covering 1191–1200 (SSWRSNNSRK) has biased composition (low complexity). Serine 1202 carries the post-translational modification Phosphoserine. Positions 1231–1249 (KYKDRGILHPKRGTEDRSD) are enriched in basic and acidic residues. Residues 1250-1264 (QSSVKSTDSSSYPSP) show a composition bias toward low complexity. Residues serine 1263, serine 1267, and serine 1281 each carry the phosphoserine modification. The YTH domain maps to 1288–1418 (VRYFIMKSSN…QVGEQLLQLW (131 aa)). Residues 1294 to 1296 (KSS), tryptophan 1310, and tryptophan 1360 each bind RNA.

The protein belongs to the DEAD box helicase family. DEAH subfamily. In terms of assembly, interacts with MEIOC; binds transcripts that regulate the mitotic cell cycle inhibiting progression into metaphase, thereby allowing meiotic prophase to proceed normally. Interacts (via ANK repeats) with XRN1. Interacts with ZCCHC4. Associates with the small ribosomal subunit. Interacts with RBM46.

Its subcellular location is the cytoplasm. The protein resides in the perinuclear region. The catalysed reaction is ATP + H2O = ADP + phosphate + H(+). 3'-5' RNA helicase that plays a key role in the male and female germline by promoting transition from mitotic to meiotic divisions in stem cells. Specifically recognizes and binds N6-methyladenosine (m6A)-containing RNAs, a modification present at internal sites of mRNAs and some non-coding RNAs that plays a role in the efficiency of RNA processing and stability. Essential for ensuring a successful progression of the meiotic program in the germline by regulating the level of m6A-containing RNAs. Acts by binding and promoting degradation of m6A-containing mRNAs: the 3'-5' RNA helicase activity is required for this process and RNA degradation may be mediated by XRN1 exoribonuclease. Required for both spermatogenesis and oogenesis. This is 3'-5' RNA helicase YTHDC2 from Pongo abelii (Sumatran orangutan).